Reading from the N-terminus, the 426-residue chain is Glucose-1-phosphate adenylyltransferase (426 aa).

Alpha-D-glucose 1-phosphate contacts are provided by residues Gly165, 180–181 (EK), and Ser191.

This sequence belongs to the bacterial/plant glucose-1-phosphate adenylyltransferase family. As to quaternary structure, homotetramer.

It catalyses the reaction alpha-D-glucose 1-phosphate + ATP + H(+) = ADP-alpha-D-glucose + diphosphate. It functions in the pathway glycan biosynthesis; glycogen biosynthesis. Its function is as follows. Involved in the biosynthesis of ADP-glucose, a building block required for the elongation reactions to produce glycogen. Catalyzes the reaction between ATP and alpha-D-glucose 1-phosphate (G1P) to produce pyrophosphate and ADP-Glc. The polypeptide is Glucose-1-phosphate adenylyltransferase (Ruminiclostridium cellulolyticum (strain ATCC 35319 / DSM 5812 / JCM 6584 / H10) (Clostridium cellulolyticum)).